A 111-amino-acid polypeptide reads, in one-letter code: Pyrimidine/purine nucleoside phosphorylase 1 (111 aa).

Belongs to the nucleoside phosphorylase PpnP family.

The enzyme catalyses a purine D-ribonucleoside + phosphate = a purine nucleobase + alpha-D-ribose 1-phosphate. It carries out the reaction adenosine + phosphate = alpha-D-ribose 1-phosphate + adenine. It catalyses the reaction cytidine + phosphate = cytosine + alpha-D-ribose 1-phosphate. The catalysed reaction is guanosine + phosphate = alpha-D-ribose 1-phosphate + guanine. The enzyme catalyses inosine + phosphate = alpha-D-ribose 1-phosphate + hypoxanthine. It carries out the reaction thymidine + phosphate = 2-deoxy-alpha-D-ribose 1-phosphate + thymine. It catalyses the reaction uridine + phosphate = alpha-D-ribose 1-phosphate + uracil. The catalysed reaction is xanthosine + phosphate = alpha-D-ribose 1-phosphate + xanthine. Catalyzes the phosphorolysis of diverse nucleosides, yielding D-ribose 1-phosphate and the respective free bases. Can use uridine, adenosine, guanosine, cytidine, thymidine, inosine and xanthosine as substrates. Also catalyzes the reverse reactions. The polypeptide is Pyrimidine/purine nucleoside phosphorylase 1 (Psychrobacter arcticus (strain DSM 17307 / VKM B-2377 / 273-4)).